An 809-amino-acid polypeptide reads, in one-letter code: LPS-assembly protein LptD (809 aa).

Positions 1–22 are cleaved as a signal peptide; it reads MRRALRLLPLPLSIAICLPAMA.

Belongs to the LptD family. Component of the lipopolysaccharide transport and assembly complex. Interacts with LptE and LptA.

Its subcellular location is the cell outer membrane. Functionally, together with LptE, is involved in the assembly of lipopolysaccharide (LPS) at the surface of the outer membrane. The polypeptide is LPS-assembly protein LptD (Xanthomonas euvesicatoria pv. vesicatoria (strain 85-10) (Xanthomonas campestris pv. vesicatoria)).